The sequence spans 201 residues: Small ribosomal subunit protein uS4 (201 aa).

The S4 RNA-binding domain occupies S91–E151.

The protein belongs to the universal ribosomal protein uS4 family. As to quaternary structure, part of the 30S ribosomal subunit. Contacts protein S5. The interaction surface between S4 and S5 is involved in control of translational fidelity.

Functionally, one of the primary rRNA binding proteins, it binds directly to 16S rRNA where it nucleates assembly of the body of the 30S subunit. With S5 and S12 plays an important role in translational accuracy. The polypeptide is Small ribosomal subunit protein uS4 (Corynebacterium diphtheriae (strain ATCC 700971 / NCTC 13129 / Biotype gravis)).